Here is a 396-residue protein sequence, read N- to C-terminus: Inositol hexakisphosphate kinase 3 (396 aa).

Residue 206–214 (PCILDLKMG) participates in substrate binding.

The protein belongs to the inositol phosphokinase (IPK) family. As to expression, highly expressed in cerebellum, brain cortex, kidney, thymus and lung. Detected at lower levels in hippocampus, testis, heart and olfactory bulb.

Its subcellular location is the cytoplasm. It catalyses the reaction 1D-myo-inositol hexakisphosphate + ATP = 5-diphospho-1D-myo-inositol 1,2,3,4,6-pentakisphosphate + ADP. It carries out the reaction 1-diphospho-1D-myo-inositol 2,3,4,5,6-pentakisphosphate + ATP + H(+) = 1,5-bis(diphospho)-1D-myo-inositol 2,3,4,6-tetrakisphosphate + ADP. Functionally, converts inositol hexakisphosphate (InsP6) to diphosphoinositol pentakisphosphate (InsP7/PP-InsP5). Converts 1,3,4,5,6-pentakisphosphate (InsP5) to PP-InsP4. This chain is Inositol hexakisphosphate kinase 3 (Ip6k3), found in Mus musculus (Mouse).